The primary structure comprises 379 residues: Forkhead box protein E1 (379 aa).

A compositionally biased stretch (polar residues) spans 1 to 11; the sequence is MTAESQQSPTR. The segment at 1-65 is disordered; the sequence is MTAESQQSPT…RRRKRPLQKG (65 aa). The span at 54–63 shows a compositional bias: basic residues; sequence KGRRRKRPLQ. A DNA-binding region (fork-head) is located at residues 66–160; sequence KPPYSYIALI…DSGSFLRRRK (95 aa). A disordered region spans residues 239–265; the sequence is HSGSEHAQPPNRSISPEVNSTSSSSCN. Positions 251–265 are enriched in low complexity; it reads SISPEVNSTSSSSCN.

In terms of tissue distribution, first expressed at late neural tube and early tailbud stages in the hypophyseal placode. Expression continues in the developing pituitary at late tailbud stages. As development progresses, expressed in the mesoderm of the branchial arches. At stage 38, expressed in the developing thyroid and in the pharyngeal endoderm.

It is found in the nucleus. In terms of biological role, transcription factor that binds consensus sites on a variety of gene promoters and activate their transcription. The polypeptide is Forkhead box protein E1 (Xenopus laevis (African clawed frog)).